The sequence spans 630 residues: Pentatricopeptide repeat-containing protein At1g63130, mitochondrial (630 aa).

Residues Met1–Lys22 constitute a mitochondrion transit peptide. PPR repeat units lie at residues Ser80–His114, Asn115–Pro149, Asp150–Pro184, Asp185–Pro219, Asp220–Pro254, Gly255–Pro289, Asn290–Pro324, Asn325–Pro359, Asp360–Pro394, Asn395–Gly429, Asn430–Pro464, Asp465–Pro499, Asp500–Pro534, Asn535–Pro569, and Asp570–Gly604.

Belongs to the PPR family. P subfamily.

The protein resides in the mitochondrion. In Arabidopsis thaliana (Mouse-ear cress), this protein is Pentatricopeptide repeat-containing protein At1g63130, mitochondrial.